Reading from the N-terminus, the 146-residue chain is MTNSKKSSNNSSKSSELYAIAETSGQQFWFEVDRYYDIDRLNAKEKDKITLEKVLLLKDKDSISVGKPYVKDAKIELEVVSHKRDKKILVYKMRPKKKTRRKMGHRQELTRVMVKSITIGKSAPKSSSKKETVKKETKPKSEKSTN.

Positions 117-146 (ITIGKSAPKSSSKKETVKKETKPKSEKSTN) are disordered. Over residues 128 to 146 (SKKETVKKETKPKSEKSTN) the composition is skewed to basic and acidic residues.

The protein belongs to the bacterial ribosomal protein bL21 family. In terms of assembly, part of the 50S ribosomal subunit. Contacts protein L20.

Functionally, this protein binds to 23S rRNA in the presence of protein L20. This Prochlorococcus marinus (strain MIT 9301) protein is Large ribosomal subunit protein bL21.